The chain runs to 66 residues: Surface composition regulator (66 aa).

Belongs to the GlgS family.

Functionally, major determinant of cell surface composition. Negatively regulates motility, adhesion and synthesis of biofilm exopolysaccharides. The protein is Surface composition regulator of Escherichia coli O139:H28 (strain E24377A / ETEC).